We begin with the raw amino-acid sequence, 102 residues long: Small ribosomal subunit protein uS10 (102 aa).

Belongs to the universal ribosomal protein uS10 family. Part of the 30S ribosomal subunit.

Involved in the binding of tRNA to the ribosomes. In Bacillus cereus (strain ATCC 10987 / NRS 248), this protein is Small ribosomal subunit protein uS10.